We begin with the raw amino-acid sequence, 77 residues long: Ubiquitin-like protein NEDD8 (77 aa).

An interaction with uba-3 region spans residues 70–72 (VLA). A Glycyl lysine isopeptide (Gly-Lys) (interchain with K-? in acceptor proteins) cross-link involves residue Gly76. A propeptide is located at residue Phe77.

This sequence belongs to the ubiquitin family. As to quaternary structure, interacts with dcn-1. Covalently attached to cullins. May interact with atx-3. In terms of processing, cleavage of precursor form is necessary for function.

It localises to the nucleus. Its subcellular location is the cytoplasm. Ubiquitin-like protein which plays an important role in cell cycle control and embryogenesis. Covalent attachment to its substrates requires prior activation by the E1 complex uba-3-ula-1 and linkage to the E2 enzyme ubc-12. Attachment of ned-8 to cullins activates their associated E3 ubiquitin ligase activity, and thus promotes polyubiquitination and proteasomal degradation of cyclins and other regulatory proteins. This is Ubiquitin-like protein NEDD8 (ned-8) from Caenorhabditis elegans.